A 949-amino-acid chain; its full sequence is Translation initiation factor IF-2 (949 aa).

Disordered stretches follow at residues 46 to 82 (LTASRPAESGPEEVRVTTNIVRRRSRPSAAAEPEAEA), 145 to 176 (EPAVAQEASPAVTAAKPVPATPAAPPQPERAS), and 188 to 361 (IPIT…KTEL). Low complexity predominate over residues 152–162 (ASPAVTAAKPV). The span at 163–172 (PATPAAPPQP) shows a compositional bias: pro residues. Positions 263 to 276 (PRDAAAPRPAGARP) are enriched in low complexity. A compositionally biased stretch (basic and acidic residues) spans 334-344 (SREERQFDPFH). A tr-type G domain is found at 449-618 (ERPPVVTIMG…LLQADLMDLK (170 aa)). The tract at residues 458 to 465 (GHVDHGKT) is G1. 458–465 (GHVDHGKT) serves as a coordination point for GTP. The interval 483 to 487 (GITQH) is G2. The segment at 504–507 (DTPG) is G3. GTP is bound by residues 504–508 (DTPGH) and 558–561 (NKID). The tract at residues 558 to 561 (NKID) is G4. Residues 594–596 (SAK) are G5.

This sequence belongs to the TRAFAC class translation factor GTPase superfamily. Classic translation factor GTPase family. IF-2 subfamily.

It is found in the cytoplasm. Functionally, one of the essential components for the initiation of protein synthesis. Protects formylmethionyl-tRNA from spontaneous hydrolysis and promotes its binding to the 30S ribosomal subunits. Also involved in the hydrolysis of GTP during the formation of the 70S ribosomal complex. In Trichlorobacter lovleyi (strain ATCC BAA-1151 / DSM 17278 / SZ) (Geobacter lovleyi), this protein is Translation initiation factor IF-2.